We begin with the raw amino-acid sequence, 177 residues long: Macro domain-containing protein in non 5'region (177 aa).

Residues Met1–Arg177 enclose the Macro domain.

The protein belongs to the MacroD-type family.

This Streptomyces griseus protein is Macro domain-containing protein in non 5'region.